Here is a 121-residue protein sequence, read N- to C-terminus: MDKTQSRLRRARQTRIKIAELQVARLAVHRTNTHIYAQVFSPCGTKVLASASTLEAEVRAQLADKSGKGGNVAAATLIGKRIAEKAKAAGIESVAFDRSGFRYHGRVKALAEAAREAGLKF.

This sequence belongs to the universal ribosomal protein uL18 family. As to quaternary structure, part of the 50S ribosomal subunit; part of the 5S rRNA/L5/L18/L25 subcomplex. Contacts the 5S and 23S rRNAs.

Its function is as follows. This is one of the proteins that bind and probably mediate the attachment of the 5S RNA into the large ribosomal subunit, where it forms part of the central protuberance. This is Large ribosomal subunit protein uL18 from Burkholderia mallei (strain NCTC 10247).